The primary structure comprises 103 residues: Small ribosomal subunit protein uS10 (103 aa).

It belongs to the universal ribosomal protein uS10 family. Part of the 30S ribosomal subunit.

In terms of biological role, involved in the binding of tRNA to the ribosomes. The chain is Small ribosomal subunit protein uS10 from Campylobacter fetus subsp. fetus (strain 82-40).